Reading from the N-terminus, the 957-residue chain is Glycine dehydrogenase (decarboxylating) (957 aa).

Lysine 708 bears the N6-(pyridoxal phosphate)lysine mark.

The protein belongs to the GcvP family. The glycine cleavage system is composed of four proteins: P, T, L and H. Pyridoxal 5'-phosphate serves as cofactor.

The enzyme catalyses N(6)-[(R)-lipoyl]-L-lysyl-[glycine-cleavage complex H protein] + glycine + H(+) = N(6)-[(R)-S(8)-aminomethyldihydrolipoyl]-L-lysyl-[glycine-cleavage complex H protein] + CO2. Its function is as follows. The glycine cleavage system catalyzes the degradation of glycine. The P protein binds the alpha-amino group of glycine through its pyridoxal phosphate cofactor; CO(2) is released and the remaining methylamine moiety is then transferred to the lipoamide cofactor of the H protein. The sequence is that of Glycine dehydrogenase (decarboxylating) from Klebsiella pneumoniae subsp. pneumoniae (strain ATCC 700721 / MGH 78578).